An 826-amino-acid polypeptide reads, in one-letter code: Zinc phosphodiesterase ELAC protein 2 (826 aa).

A mitochondrion-targeting transit peptide spans M1–M16. Disordered stretches follow at residues M16 to C51 and E188 to R231. Over residues A27 to R38 the composition is skewed to basic and acidic residues. S199, S208, S212, S229, S618, and S736 each carry phosphoserine. Residues S208–L224 are compositionally biased toward basic and acidic residues. Positions E798 to Q826 are disordered. Positions P808 to A820 are enriched in basic and acidic residues.

It belongs to the RNase Z family. In terms of assembly, homodimer. Interacts with PTCD1. Zn(2+) is required as a cofactor.

Its subcellular location is the mitochondrion. It localises to the mitochondrion matrix. It is found in the mitochondrion nucleoid. The protein resides in the nucleus. The enzyme catalyses Endonucleolytic cleavage of RNA, removing extra 3' nucleotides from tRNA precursor, generating 3' termini of tRNAs. A 3'-hydroxy group is left at the tRNA terminus and a 5'-phosphoryl group is left at the trailer molecule.. Its function is as follows. Zinc phosphodiesterase, which displays mitochondrial tRNA 3'-processing endonuclease activity. Involved in tRNA maturation, by removing a 3'-trailer from precursor tRNA. Associates with mitochondrial DNA complexes at the nucleoids to initiate RNA processing and ribosome assembly. This Pan troglodytes (Chimpanzee) protein is Zinc phosphodiesterase ELAC protein 2 (ELAC2).